A 291-amino-acid polypeptide reads, in one-letter code: ATP synthase gamma chain (291 aa).

Belongs to the ATPase gamma chain family. As to quaternary structure, F-type ATPases have 2 components, CF(1) - the catalytic core - and CF(0) - the membrane proton channel. CF(1) has five subunits: alpha(3), beta(3), gamma(1), delta(1), epsilon(1). CF(0) has three main subunits: a, b and c.

The protein localises to the cell inner membrane. Produces ATP from ADP in the presence of a proton gradient across the membrane. The gamma chain is believed to be important in regulating ATPase activity and the flow of protons through the CF(0) complex. The protein is ATP synthase gamma chain of Sulfurihydrogenibium sp. (strain YO3AOP1).